Reading from the N-terminus, the 1759-residue chain is Putative ATP-dependent RNA helicase TDRD12 (1759 aa).

The 80-residue stretch at 74–153 (FQNLEQVWFS…KLSNTETRAV (80 aa)) folds into the Tudor 1 domain. A compositionally biased stretch (low complexity) spans 480 to 495 (NSAASESSTKSSMDSS). The segment at 480-506 (NSAASESSTKSSMDSSRISDEDDLSSD) is disordered. The Helicase ATP-binding domain occupies 611–789 (WGTILRGLST…DFLEPIVLKA (179 aa)). 624 to 631 (SPPRSGKT) lines the ATP pocket. In terms of domain architecture, Helicase C-terminal spans 823–980 (NVLQFIDSVQ…NVPKILDEVS (158 aa)). Residues 1335–1394 (GSNVGDIVLAKFPDDSMYERARIDHIYSEDKVKCFFVDQGDWRDVSTNDLATITENFITQ) form the Tudor 2 domain. A CS domain is found at 1618–1704 (LSKPKICWSQ…LMCRNWLALT (87 aa)).

As to quaternary structure, interacts (via Tudor domain 2) with Siwi. Component of the PET complex, at least composed of EXD1, SIWI, TDRD12 and piRNAs. Expressed in the yolk cells. Not detected in yolk granules.

It localises to the chromosome. Its subcellular location is the cytoplasm. It is found in the cytosol. The protein localises to the nucleus membrane. The catalysed reaction is ATP + H2O = ADP + phosphate + H(+). In terms of biological role, probable ATP-binding RNA helicase required during spermatogenesis to repress transposable elements and preventing their mobilization, which is essential for the germline integrity. Acts via the piRNA metabolic process, which mediates the repression of transposable elements during meiosis by forming complexes composed of piRNAs and Piwi proteins and governs the methylation and subsequent repression of transposons. This is Putative ATP-dependent RNA helicase TDRD12 (TDRD12) from Bombyx mori (Silk moth).